The chain runs to 433 residues: Tol-Pal system protein TolB (433 aa).

Positions 1–21 (MINLFRGLLVVLCFASAMVSA) are cleaved as a signal peptide.

Belongs to the TolB family. In terms of assembly, the Tol-Pal system is composed of five core proteins: the inner membrane proteins TolA, TolQ and TolR, the periplasmic protein TolB and the outer membrane protein Pal. They form a network linking the inner and outer membranes and the peptidoglycan layer.

Its subcellular location is the periplasm. In terms of biological role, part of the Tol-Pal system, which plays a role in outer membrane invagination during cell division and is important for maintaining outer membrane integrity. The sequence is that of Tol-Pal system protein TolB from Pseudomonas syringae pv. syringae (strain B728a).